Consider the following 427-residue polypeptide: 3-phosphoshikimate 1-carboxyvinyltransferase (427 aa).

Residues K22, S23, and R27 each contribute to the 3-phosphoshikimate site. K22 contributes to the phosphoenolpyruvate binding site. 2 residues coordinate phosphoenolpyruvate: G96 and R124. Residues S169, S170, Q171, S197, D313, N336, and K340 each contribute to the 3-phosphoshikimate site. Q171 lines the phosphoenolpyruvate pocket. The active-site Proton acceptor is D313. Residues R344, R386, and K411 each contribute to the phosphoenolpyruvate site.

Belongs to the EPSP synthase family. In terms of assembly, monomer.

Its subcellular location is the cytoplasm. It carries out the reaction 3-phosphoshikimate + phosphoenolpyruvate = 5-O-(1-carboxyvinyl)-3-phosphoshikimate + phosphate. Its pathway is metabolic intermediate biosynthesis; chorismate biosynthesis; chorismate from D-erythrose 4-phosphate and phosphoenolpyruvate: step 6/7. Functionally, catalyzes the transfer of the enolpyruvyl moiety of phosphoenolpyruvate (PEP) to the 5-hydroxyl of shikimate-3-phosphate (S3P) to produce enolpyruvyl shikimate-3-phosphate and inorganic phosphate. The protein is 3-phosphoshikimate 1-carboxyvinyltransferase of Escherichia coli O9:H4 (strain HS).